We begin with the raw amino-acid sequence, 345 residues long: G-protein coupled receptor str-33 (345 aa).

The Extracellular portion of the chain corresponds to 1–11 (MTVNLRDLSRT). A helical membrane pass occupies residues 12-32 (IAEFAFLTALVCNSLLIYLTA). Residues 33–37 (RRTKN) lie on the Cytoplasmic side of the membrane. A helical membrane pass occupies residues 38–58 (ITGAYKYMIILFALLGLIFSC). At 59 to 92 (TEMLARPFVHNFNASFVYFSLSNDLSEFKSLVQM) the chain is on the extracellular side. Residue N71 is glycosylated (N-linked (GlcNAc...) asparagine). Residues 93–113 (LLVLYSGLYSSLISFVAVQFI) form a helical membrane-spanning segment. The Cytoplasmic portion of the chain corresponds to 114-133 (YRYMVLVNANLLESWFTGWK). Residues 134-154 (LVFWVFYVIFFGFAWSASVYF) traverse the membrane as a helical segment. Topologically, residues 155–204 (CLFPDTYSYNYIRTEFKDVYNIGVDRVAIFILVAYEKHPSSEEYKLRPAS) are extracellular. The chain crosses the membrane as a helical span at residues 205–225 (VIMIAGTISILVIQYSIMLFC). Topologically, residues 226 to 258 (GASMHRQMNEKLKNFSPDNQRLQKQFFKTLLLQ) are cytoplasmic. The chain crosses the membrane as a helical span at residues 259–279 (ISVPTVLFHMPIFPVLLGPFF). Topologically, residues 280–288 (NFEISAESG) are extracellular. Residues 289–309 (IIYSLFSLYPPIDGLIIMTVV) traverse the membrane as a helical segment. Over 310–345 (TDYRIALTELFLGSHSGAQVEVIPVEVVSILNFSLL) the chain is Cytoplasmic.

Belongs to the nematode receptor-like protein str family. In terms of tissue distribution, detected in ALM and PLM mechanosensory neurons and head neurons.

It is found in the cell membrane. Functionally, regulates egg-laying and locomotion. Likely to act upstream of goa-1 to suppress 5-hydroxytryptamine (5-HT) biosynthesis in hermaphrodite-specific neurons (HSNs) through inhibition of tph-1 transcription. This Caenorhabditis elegans protein is G-protein coupled receptor str-33.